Reading from the N-terminus, the 252-residue chain is tRNA (guanine-N(1)-)-methyltransferase (252 aa).

Residues glycine 113 and 133–138 contribute to the S-adenosyl-L-methionine site; that span reads IGDYVL.

Belongs to the RNA methyltransferase TrmD family. Homodimer.

The protein resides in the cytoplasm. The catalysed reaction is guanosine(37) in tRNA + S-adenosyl-L-methionine = N(1)-methylguanosine(37) in tRNA + S-adenosyl-L-homocysteine + H(+). Its function is as follows. Specifically methylates guanosine-37 in various tRNAs. This Xanthomonas campestris pv. campestris (strain B100) protein is tRNA (guanine-N(1)-)-methyltransferase.